A 408-amino-acid polypeptide reads, in one-letter code: COP9 signalosome complex subunit 4 (408 aa).

One can recognise a PCI domain in the interval 194-374; the sequence is RIQDARRRFL…GIIYFESNTT (181 aa).

The protein belongs to the CSN4 family. In terms of assembly, component of the COP9 signalosome (CSN) complex.

The protein localises to the cytoplasm. The protein resides in the nucleus. Component of the COP9 signalosome (CSN) complex that acts as an regulator of the ubiquitin (Ubl) conjugation pathway by mediating the deneddylation of the cullin subunit of SCF-type E3 ubiquitin-protein ligase complexes. The CSN complex seems to link protein degradation to sexual development. Required for fruit body formation. The chain is COP9 signalosome complex subunit 4 (csnD) from Emericella nidulans (strain FGSC A4 / ATCC 38163 / CBS 112.46 / NRRL 194 / M139) (Aspergillus nidulans).